The chain runs to 441 residues: MRVVTIVILLCFCKAAELRKASPGSVRSRVNHGRAGGGRRGSNPVKRYAPGLPCDVYTYLHEKYLDCQERKLVYVLPGWPQDLLHMLLARNKIRTLKNNMFSKFKKLKSLDLQQNEISKIESEAFFGLNKLTTLLLQHNQIKVLTEEVFIYTPLLSYLRLYDNPWHCTCEIETLISMLQIPRNRNLGNYAKCESPQEQKNKKLRQIKSEQLCNEEEKEQLDPKPQVSGRPPVIKPEVDSTFCHNYVFPIQTLDCKRKELKKVPNNIPPDIVKLDLSYNKINQLRPKEFEDVHELKKLNLSSNGIEFIDPAAFLGLTHLEELDLSNNSLQNFDYGVLEDLYFLKLLWLRDNPWRCDYNIHYLYYWLKHHYNVHFNGLECKTPEEYKGWSVGKYIRSYYEECPKDKLPAYPESFDQDTEDDEWEKKHRDHTAKKQSVIITIVG.

Positions 1 to 18 (MRVVTIVILLCFCKAAEL) are cleaved as a signal peptide. LRR repeat units lie at residues 82-103 (DLLHMLLARNKIRTLKNNMFSK), 106-127 (KLKSLDLQQNEISKIESEAFFG), and 130-151 (KLTTLLLQHNQIKVLTEEVFIY). Residues 163–214 (NPWHCTCEIETLISMLQIPRNRNLGNYAKCESPQEQKNKKLRQIKSEQLCNE) form the LRRCT 1 domain. Positions 225–268 (QVSGRPPVIKPEVDSTFCHNYVFPIQTLDCKRKELKKVPNNIPP) constitute an LRRNT domain. 3 LRR repeats span residues 269-290 (DIVKLDLSYNKINQLRPKEFED), 293-314 (ELKKLNLSSNGIEFIDPAAFLG), and 317-340 (HLEELDLSNNSLQNFDYGVLEDLY). The region spanning 350-402 (NPWRCDYNIHYLYYWLKHHYNVHFNGLECKTPEEYKGWSVGKYIRSYYEECPK) is the LRRCT 2 domain.

Expressed in osteoblast cell lines. Well expressed in ovary, heart, pancreas, skeletal muscle, lung, and fetal kidney and lung and only at the basal levels in the other tissues examined including adult kidney. More expressed in S-type neuroblastoma cells than in N-type neuroblastoma cells.

It is found in the secreted. The protein resides in the extracellular space. Functionally, involved in bone homeostasis. Acts as a negative regulator of RANKL-induced osteoclast precursor differentiation from bone marrow precursors. The protein is Leucine-rich repeat-containing protein 17 (LRRC17) of Homo sapiens (Human).